The chain runs to 40 residues: SDGRDAAVIYTESDVIARGDCKPCMHPDCRFNPGRCRPRE.

Residues 1–18 constitute a propeptide that is removed on maturation; sequence SDGRDAAVIYTESDVIAR. 2 disulfides stabilise this stretch: cysteine 21/cysteine 36 and cysteine 24/cysteine 29.

Belongs to the conotoxin A superfamily. Expressed by the venom duct.

Its subcellular location is the secreted. Probable neurotoxin with unknown target. Possibly targets ion channels. The sequence is that of Conotoxin Bt14.16 from Conus betulinus (Beech cone).